The sequence spans 97 residues: Vitelline membrane protein 15a-2 (97 aa).

A signal peptide spans M1–A19. The tract at residues D20–A23 is required for binding to the gut receptor. The disordered stretch occupies residues P26–H46. Residues K61–Y97 form the VM domain.

Belongs to the vitelline membrane protein family. As to expression, expressed in the anterior region of the follicle cells.

It is found in the secreted. In terms of biological role, has an oostatic activity. Inhibits trypsin biosynthesis in the midgut epithelial cells which indirectly reduces the vitellogenin concentration in the hemolymph resulting in inhibition of oocyte development. This Aedes aegypti (Yellowfever mosquito) protein is Vitelline membrane protein 15a-2 (15a-2).